Consider the following 348-residue polypeptide: Sulfate/thiosulfate import ATP-binding protein CysA (348 aa).

Positions 3–237 (IRIQELRKQF…PSSPFVYSFV (235 aa)) constitute an ABC transporter domain. Residue 35–42 (GPSGSGKT) participates in ATP binding.

It belongs to the ABC transporter superfamily. Sulfate/tungstate importer (TC 3.A.1.6) family. In terms of assembly, the complex is composed of two ATP-binding proteins (CysA), two transmembrane proteins (CysT and CysW) and a solute-binding protein (CysP).

The protein localises to the cell inner membrane. The catalysed reaction is sulfate(out) + ATP + H2O = sulfate(in) + ADP + phosphate + H(+). It carries out the reaction thiosulfate(out) + ATP + H2O = thiosulfate(in) + ADP + phosphate + H(+). In terms of biological role, part of the ABC transporter complex CysAWTP involved in sulfate/thiosulfate import. Responsible for energy coupling to the transport system. The chain is Sulfate/thiosulfate import ATP-binding protein CysA from Xylella fastidiosa (strain Temecula1 / ATCC 700964).